A 61-amino-acid polypeptide reads, in one-letter code: Small ribosomal subunit protein uS14 (61 aa).

Residues Cys24, Cys27, Cys40, and Cys43 each contribute to the Zn(2+) site.

Belongs to the universal ribosomal protein uS14 family. Zinc-binding uS14 subfamily. As to quaternary structure, part of the 30S ribosomal subunit. Contacts proteins S3 and S10. Requires Zn(2+) as cofactor.

Binds 16S rRNA, required for the assembly of 30S particles and may also be responsible for determining the conformation of the 16S rRNA at the A site. This is Small ribosomal subunit protein uS14 from Borreliella afzelii (strain PKo) (Borrelia afzelii).